The following is a 705-amino-acid chain: Putative membrane protein SCO6666 (705 aa).

The next 13 membrane-spanning stretches (helical) occupy residues 16 to 36, 144 to 164, 177 to 197, 201 to 221, 232 to 252, 280 to 300, 306 to 326, 360 to 380, 504 to 524, 528 to 548, 561 to 581, 615 to 635, and 636 to 656; these read VMLL…GVFG, LHGI…PLLG, NAEL…FGGL, GLPL…LFGF, IQVT…LMLV, LFSG…PSTF, LAVA…LPAL, VAVL…VTGM, ALTV…SVLL, TVAT…WVFQ, LGAL…GLAM, VVTC…TGGF, and SPIL…ATVV.

This sequence belongs to the resistance-nodulation-cell division (RND) (TC 2.A.6) family. MmpL subfamily.

Its subcellular location is the cell membrane. The polypeptide is Putative membrane protein SCO6666 (Streptomyces coelicolor (strain ATCC BAA-471 / A3(2) / M145)).